We begin with the raw amino-acid sequence, 100 residues long: MEKLNALRKQKIRAVILLEAVVALAIFASIATLLLGQIQKNRQEEAKILQKEEVLRVAKMALQTGQNQVSINGVEIQVFSSEKGLEVYHGSEQLLAIKEP.

The helical transmembrane segment at 15–35 (VILLEAVVALAIFASIATLLL) threads the bilayer.

The transformation pili are flexible filaments, consisting mainly of the major pilin ComGC and smaller amounts of the minor pilins, including at least ComGD, ComGF and ComGG, and perhaps ComGE. Interacts with ComGD. Interacts with ComGF. Interacts with ComGG.

It is found in the cell membrane. It localises to the cell surface. In terms of biological role, required for formation of the type IV-like pilus (T4P) that plays a role in transformation. Transformation pili are dynamically extended and retracted, perhaps thereby promoting DNA uptake and transformation. Involved in transformation. Required for DNA binding. This chain is Competence protein ComGE, found in Streptococcus pneumoniae (strain ATCC BAA-255 / R6).